Reading from the N-terminus, the 150-residue chain is Phosphopantetheine adenylyltransferase (150 aa).

Threonine 15 contacts substrate. ATP is bound by residues 15-16 (TF) and histidine 23. Substrate-binding residues include isoleucine 80 and arginine 94. Residues 95 to 97 (GIR), glutamate 105, and 130 to 136 (LENISSR) contribute to the ATP site.

It belongs to the bacterial CoaD family. Homohexamer. The cofactor is Mg(2+).

The protein localises to the cytoplasm. The enzyme catalyses (R)-4'-phosphopantetheine + ATP + H(+) = 3'-dephospho-CoA + diphosphate. It participates in cofactor biosynthesis; coenzyme A biosynthesis; CoA from (R)-pantothenate: step 4/5. In terms of biological role, reversibly transfers an adenylyl group from ATP to 4'-phosphopantetheine, yielding dephospho-CoA (dPCoA) and pyrophosphate. The sequence is that of Phosphopantetheine adenylyltransferase from Malacoplasma penetrans (strain HF-2) (Mycoplasma penetrans).